A 628-amino-acid chain; its full sequence is Serine/threonine-protein kinase Nek11 (628 aa).

Residues 30-288 (YVLQQKLGSG…AADILKAPYM (259 aa)) form the Protein kinase domain. Residues 36 to 44 (LGSGSFGTV) and Lys-62 each bind ATP. Asp-159 serves as the catalytic Proton acceptor. Phosphoserine; by CHEK1 is present on Ser-274. The stretch at 347-385 (WLRKLQAADERARRLKKIAEENYKENDKRMQALRSRNVG) forms a coiled coil. Acidic residues predominate over residues 452–463 (SEDSEEQEEEMI). The interval 452–475 (SEDSEEQEEEMIFSEAGGDTKEEE) is disordered.

It belongs to the protein kinase superfamily. NEK Ser/Thr protein kinase family. NIMA subfamily. Interacts with NEK2. Mn(2+) serves as cofactor. The cofactor is Mg(2+). In terms of processing, phosphorylated by NEK2. Phosphorylation at Ser-274 is important for its activation.

It is found in the nucleus. Its subcellular location is the nucleolus. The catalysed reaction is L-seryl-[protein] + ATP = O-phospho-L-seryl-[protein] + ADP + H(+). It catalyses the reaction L-threonyl-[protein] + ATP = O-phospho-L-threonyl-[protein] + ADP + H(+). Its activity is regulated as follows. Autorepressed by intramolecular binding of the C-terminus which dissociates following phosphorylation by NEK2. Activated in response to DNA damage. Inhibited by zinc. Protein kinase which plays an important role in the G2/M checkpoint response to DNA damage. Controls degradation of CDC25A by directly phosphorylating it on residues whose phosphorylation is required for BTRC-mediated polyubiquitination and degradation. The chain is Serine/threonine-protein kinase Nek11 from Mus musculus (Mouse).